The primary structure comprises 363 residues: Chorismate synthase (363 aa).

Positions 48 and 54 each coordinate NADP(+). Residues 125-127 (RSS), 238-239 (NA), Gly278, 293-297 (KPTSS), and Arg319 contribute to the FMN site.

The protein belongs to the chorismate synthase family. Homotetramer. It depends on FMNH2 as a cofactor.

The enzyme catalyses 5-O-(1-carboxyvinyl)-3-phosphoshikimate = chorismate + phosphate. Its pathway is metabolic intermediate biosynthesis; chorismate biosynthesis; chorismate from D-erythrose 4-phosphate and phosphoenolpyruvate: step 7/7. Functionally, catalyzes the anti-1,4-elimination of the C-3 phosphate and the C-6 proR hydrogen from 5-enolpyruvylshikimate-3-phosphate (EPSP) to yield chorismate, which is the branch point compound that serves as the starting substrate for the three terminal pathways of aromatic amino acid biosynthesis. This reaction introduces a second double bond into the aromatic ring system. The polypeptide is Chorismate synthase (Alcanivorax borkumensis (strain ATCC 700651 / DSM 11573 / NCIMB 13689 / SK2)).